The sequence spans 208 residues: Small ribosomal subunit protein uS4 (208 aa).

Residues 98 to 160 (SRLDNVAYNM…AKSYLRIKSS (63 aa)) enclose the S4 RNA-binding domain.

This sequence belongs to the universal ribosomal protein uS4 family. In terms of assembly, part of the 30S ribosomal subunit. Contacts protein S5. The interaction surface between S4 and S5 is involved in control of translational fidelity.

In terms of biological role, one of the primary rRNA binding proteins, it binds directly to 16S rRNA where it nucleates assembly of the body of the 30S subunit. Its function is as follows. With S5 and S12 plays an important role in translational accuracy. This chain is Small ribosomal subunit protein uS4, found in Nitrosomonas eutropha (strain DSM 101675 / C91 / Nm57).